The sequence spans 294 residues: Aspartate carbamoyltransferase catalytic subunit (294 aa).

Residues R49 and T50 each contribute to the carbamoyl phosphate site. Residue K77 coordinates L-aspartate. Positions 99, 127, and 130 each coordinate carbamoyl phosphate. The L-aspartate site is built by R161 and R211. Carbamoyl phosphate contacts are provided by G250 and P251.

It belongs to the aspartate/ornithine carbamoyltransferase superfamily. ATCase family. As to quaternary structure, heterododecamer (2C3:3R2) of six catalytic PyrB chains organized as two trimers (C3), and six regulatory PyrI chains organized as three dimers (R2).

The enzyme catalyses carbamoyl phosphate + L-aspartate = N-carbamoyl-L-aspartate + phosphate + H(+). It functions in the pathway pyrimidine metabolism; UMP biosynthesis via de novo pathway; (S)-dihydroorotate from bicarbonate: step 2/3. Its function is as follows. Catalyzes the condensation of carbamoyl phosphate and aspartate to form carbamoyl aspartate and inorganic phosphate, the committed step in the de novo pyrimidine nucleotide biosynthesis pathway. The protein is Aspartate carbamoyltransferase catalytic subunit of Sulfurovum sp. (strain NBC37-1).